The primary structure comprises 130 residues: Small ribosomal subunit protein uS11 (130 aa).

This sequence belongs to the universal ribosomal protein uS11 family. As to quaternary structure, part of the 30S ribosomal subunit. Interacts with proteins S7 and S18. Binds to IF-3.

Located on the platform of the 30S subunit, it bridges several disparate RNA helices of the 16S rRNA. Forms part of the Shine-Dalgarno cleft in the 70S ribosome. This Prochlorococcus marinus (strain MIT 9211) protein is Small ribosomal subunit protein uS11.